The following is a 145-amino-acid chain: Dihydrolipoyllysine-residue succinyltransferase component of 2-oxoglutarate dehydrogenase complex, mitochondrial (145 aa).

In terms of domain architecture, Lipoyl-binding spans 4–31 (ITVQTPAFAESVTEGDVRVEGGTPLFTL). Serine 14 is subject to Phosphoserine. N6-acetyllysine occurs at positions 36 and 66. Catalysis depends on residues histidine 119 and aspartate 123.

Belongs to the 2-oxoacid dehydrogenase family. As to quaternary structure, the 2-oxoglutarate dehydrogenase complex is composed of OGDH (2-oxoglutarate dehydrogenase; E1), DLST (dihydrolipoamide succinyltransferase; E2), DLD (dihydrolipoamide dehydrogenase; E3) and the assembly factor KGD4. It contains multiple copies of the three enzymatic components (E1, E2 and E3). In the nucleus, the 2-oxoglutarate dehydrogenase complex associates with KAT2A. Interacts with ABHD11; this interaction maintains the functional lipoylation of the 2-oxoglutarate dehydrogenase complex. The cofactor is (R)-lipoate.

Its subcellular location is the mitochondrion matrix. The protein resides in the nucleus. The enzyme catalyses N(6)-[(R)-dihydrolipoyl]-L-lysyl-[protein] + succinyl-CoA = N(6)-[(R)-S(8)-succinyldihydrolipoyl]-L-lysyl-[protein] + CoA. Its pathway is amino-acid degradation; L-lysine degradation via saccharopine pathway; glutaryl-CoA from L-lysine: step 6/6. It functions in the pathway carbohydrate metabolism; tricarboxylic acid cycle. Dihydrolipoamide succinyltransferase (E2) component of the 2-oxoglutarate dehydrogenase complex. The 2-oxoglutarate dehydrogenase complex catalyzes the overall conversion of 2-oxoglutarate to succinyl-CoA and CO(2). The 2-oxoglutarate dehydrogenase complex is mainly active in the mitochondrion. A fraction of the 2-oxoglutarate dehydrogenase complex also localizes in the nucleus and is required for lysine succinylation of histones: associates with KAT2A on chromatin and provides succinyl-CoA to histone succinyltransferase KAT2A. In Mesocricetus auratus (Golden hamster), this protein is Dihydrolipoyllysine-residue succinyltransferase component of 2-oxoglutarate dehydrogenase complex, mitochondrial.